Consider the following 277-residue polypeptide: Chitosanase (277 aa).

The N-terminal stretch at 1–35 (MKISMQKADFWKKAAISLLVFTMFFTLMMSETVFA) is a signal peptide. Glu-54 serves as the catalytic Proton donor. Asp-70 serves as the catalytic Nucleophile.

It belongs to the glycosyl hydrolase 46 family.

The protein localises to the secreted. The catalysed reaction is Endohydrolysis of beta-(1-&gt;4)-linkages between D-glucosamine residues in a partly acetylated chitosan.. Functionally, aids in the defense against invading fungal pathogens by degrading their cell wall chitosan. The protein is Chitosanase (csn) of Bacillus subtilis (strain 168).